The following is a 329-amino-acid chain: Cytosolic arginine sensor for mTORC1 subunit 2 (329 aa).

ACT domains are found at residues 72 to 140 (ADAT…HTLS) and 262 to 322 (ELWK…HALK).

This sequence belongs to the GATS family. Forms homodimers and heterodimers with CASTOR1. Interacts with the GATOR2 complex which is composed of MIOS, SEC13, SEH1L, WDR24 and WDR59; the interaction is not regulated by arginine.

It localises to the cytoplasm. It is found in the cytosol. In terms of biological role, functions as a negative regulator of the TORC1 signaling pathway through the GATOR complex. As part of homodimers or heterodimers with CASTOR1, directly binds and inhibits the GATOR subcomplex GATOR2 and thereby mTORC1. Does not directly bind arginine, but binding of arginine to CASTOR1 disrupts the interaction of CASTOR2-containing heterodimers with GATOR2 which can in turn activate mTORC1 and the TORC1 signaling pathway. In Mus musculus (Mouse), this protein is Cytosolic arginine sensor for mTORC1 subunit 2.